A 224-amino-acid chain; its full sequence is Cytidylate kinase (224 aa).

10–18 provides a ligand contact to ATP; it reads GPSGVGKGT.

Belongs to the cytidylate kinase family. Type 1 subfamily.

The protein localises to the cytoplasm. The enzyme catalyses CMP + ATP = CDP + ADP. It catalyses the reaction dCMP + ATP = dCDP + ADP. This Haemophilus ducreyi (strain 35000HP / ATCC 700724) protein is Cytidylate kinase.